The primary structure comprises 159 residues: Small ribosomal subunit protein uS4 (159 aa).

An S4 RNA-binding domain is found at 106–158; that stretch reads RRLQTIVYRKGLAKSIYHARQLVVHGHVAVAGRRVTSPGFLVPRDLEDKITLI.

This sequence belongs to the universal ribosomal protein uS4 family. Part of the 30S ribosomal subunit. Contacts protein S5. The interaction surface between S4 and S5 is involved in control of translational fidelity.

One of the primary rRNA binding proteins, it binds directly to 16S rRNA where it nucleates assembly of the body of the 30S subunit. Its function is as follows. With S5 and S12 plays an important role in translational accuracy. The polypeptide is Small ribosomal subunit protein uS4 (Pyrobaculum islandicum (strain DSM 4184 / JCM 9189 / GEO3)).